The chain runs to 341 residues: Major histocompatibility complex class I-related protein 1 (341 aa).

An N-terminal signal peptide occupies residues 1–22 (MGELMAFLLPLIIVLMVKHSDS). The segment at 23–109 (RTHSLRYFRL…KRLQRHYNHS (87 aa)) is alpha-1. The antigen-binding cleft stretch occupies residues 23 to 201 (RTHSLRYFRL…EYGKDTLQRT (179 aa)). Residues 23–302 (RTHSLRYFRL…QESETIPLVM (280 aa)) lie on the Extracellular side of the membrane. Residues R31, S46, and K65 each coordinate 5-(2-oxoethylideneamino)-6-(D-ribitylamino)uracil. Positions 31, 46, and 65 each coordinate 5-(2-oxopropylideneamino)-6-(D-ribitylamino)uracil. 7-hydroxy-6-methyl-8-(1-D-ribityl)lumazine contacts are provided by R31, S46, and K65. 8-(9H-purin-6-yl)-2-oxa-8-azabicyclo[3.3.1]nona-3,6-diene-4,6-dicarbaldehyde is bound at residue R31. Positions 65 and 80 each coordinate 8-(9H-purin-6-yl)-2-oxa-8-azabicyclo[3.3.1]nona-3,6-diene-4,6-dicarbaldehyde. K65 is a binding site for 2-amino-4-oxopteridine-6-carbaldehyde. Residue K65 participates in pyridoxal binding. N107 carries an N-linked (GlcNAc...) asparagine glycan. The segment at 110-201 (GSHTYQRMIG…EYGKDTLQRT (92 aa)) is alpha-2. R116, Y174, and Q175 together coordinate 5-(2-oxoethylideneamino)-6-(D-ribitylamino)uracil. R116, Y174, and Q175 together coordinate 5-(2-oxopropylideneamino)-6-(D-ribitylamino)uracil. Residues R116, Y174, and Q175 each contribute to the 7-hydroxy-6-methyl-8-(1-D-ribityl)lumazine site. 8-(9H-purin-6-yl)-2-oxa-8-azabicyclo[3.3.1]nona-3,6-diene-4,6-dicarbaldehyde is bound at residue R116. 2 cysteine pairs are disulfide-bonded: C120–C183 and C222–C278. An alpha-3 region spans residues 202–293 (EPPLVRVNRK…GVHMVLQVPQ (92 aa)). In terms of domain architecture, Ig-like C1-type spans 203 to 299 (PPLVRVNRKE…QVPQESETIP (97 aa)). Residues 294 to 302 (ESETIPLVM) are connecting peptide. The chain crosses the membrane as a helical span at residues 303 to 323 (KAVSGSIVLVIVLAGVGVLVW). The Cytoplasmic portion of the chain corresponds to 324 to 341 (RRRPREQNGAIYLPTPDR).

This sequence belongs to the MHC class I family. In terms of assembly, heterotrimer that consists of MR1, B2M and a metabolite antigen. Major classes of metabolite ligands presented by MR1 include riboflavin-related antigens, pyrimidines and ribityl lumazines, nucleobase adducts and folate derivatives. Forms reversible covalent Schiff base complexes with microbial pyrimidine-based metabolite, which serves as a molecular switch triggering complete folding, stable association with B2M and translocation of the ternary complex from endoplasmic reticulum to the plasma membrane. Alternatively, forms non-Schiff base complexes with ribityl lumazines. On antigen-presenting cells, the ternary complex interacts with TCR on MR1-restricted T cells, predominantly represented by CD8-positive and CD4- and CD8-double negative MAIT cell subsets. Interacts with TAPBP and TAPBPL chaperones in the endoplasmic reticulum. TAPBP associated or not with MHC class I peptide loading complex binds ligand-free MR1 or MR1-B2M complex, providing for stable MR1 pools ready for metabolite antigen processing. TAPBPL interacts with MR1 in a ligand-independent way; this interaction may stabilize MR1 pool and facilitate ligand loading and dissociation. MR1-B2M heterodimer adopts a topology similar to classical MHC class I molecules, with alpha-1 and alpha-2 domains of MR1 forming the antigen-binding cleft composed of two alpha-helices resting on a floor of 7-stranded anti-parallel beta-pleated sheet. The ribityl moiety of pyrimidine-based antigens is recognized by Tyr-95 residue in the CDR3 alpha loop of the invariant TRAV1-2 TCR. As to quaternary structure, homodimerizes and does not associate with B2M. Post-translationally, N-glycosylated. As to expression, ubiquitous. Low expression is detected in peripheral blood B cells, T cells, monocytes and in bronchial epithelial cells (at protein level). Expressed in plasmablasts or plasma B cells in the lamina propria of ileum, appendix and colon (at protein level). Highly expressed on a subset of CD45-positive CD3-positive thymocytes (at protein level).

Its subcellular location is the cell membrane. It is found in the endoplasmic reticulum membrane. The protein localises to the golgi apparatus membrane. It localises to the early endosome membrane. The protein resides in the late endosome membrane. Its subcellular location is the secreted. With respect to regulation, inhibited by pterin-based metabolites such as 6-formylpterin (6-FP, a product of folic acid photodegradation). 6-FP competitively inhibits MAIT cell activation by 5-OP-RU. Modulated by commonly prescribed anti-inflammatory drug metabolites. Inhibited by salicilates such as 3-formylsalicylic and 5-formylsalicylic acids. Activated by diclofenac and/or its hydroxy metabolites. Its function is as follows. Antigen-presenting molecule specialized in displaying microbial pyrimidine-based metabolites to alpha-beta T cell receptors (TCR) on innate-type mucosal-associated invariant T (MAIT) cells. In complex with B2M preferentially presents riboflavin-derived metabolites to semi-invariant TRAV1.2 TCRs on MAIT cells, guiding immune surveillance of the microbial metabolome at mucosal epithelial barriers. Signature pyrimidine-based microbial antigens are generated via non-enzymatic condensation of metabolite intermediates of the riboflavin pathway with by-products arising from other metabolic pathways such as glycolysis. Typical potent antigenic metabolites are 5-(2-oxoethylideneamino)-6-D-ribitylaminouracil (5-OE-RU) and 5-(2-oxopropylideneamino)-6-D-ribitylaminouracil (5-OP-RU), products of condensation of 5-amino-6-D-ribityaminouracil (5-A-RU) with glyoxal or methylglyoxal by-products, respectively. May present microbial antigens to various TRAV1-2-negative MAIT cell subsets, providing for unique recognition of diverse microbes, including pathogens that do not synthesize riboflavin. Upon antigen recognition, elicits rapid innate-type MAIT cell activation to eliminate pathogenic microbes by directly killing infected cells. During T cell development, drives thymic selection and post-thymic terminal differentiation of MAIT cells in a process dependent on commensal microflora. Acts as an immune sensor of cancer cell metabolome. May present a tumor-specific or -associated metabolite essential for cancer cell survival to a 'pan-cancer' TCR consisting of TRAV38.2-DV8*TRAJ31 alpha chain paired with a TRBV25.1*TRBJ2.3 beta chain on a non-MAIT CD8-positive T cell clone (MC.7.G5), triggering T cell-mediated killing of a wide range of cancer cell types. Functionally, allele MR1*01: Presents microbial-derived metabolite 5-OP-RU to semi-invariant TRAV1.2-TRAJ33-TRBV6.1 (A-F7) TCR on MAIT cells. Presents nucleobase carbonyl adducts generated during oxidative stress. Captures M3Ade, a nucleobase adduct composed of one adenine modified by a malondialdehyde trimer, for recognition by MR1-restricted T cell clones expressing a polyclonal TCR repertoire. Displays moderate binding affinity toward tumor-enriched pyridoxal and pyridoxal 5'-phosphate antigens. Allele MR1*04: Presents tumor-enriched metabolite pyridoxal to pan-cancer 7.G5 TCR on T cells enabling preferential recognition of cancer cells. May act as an alloantigen. The chain is Major histocompatibility complex class I-related protein 1 from Homo sapiens (Human).